A 376-amino-acid polypeptide reads, in one-letter code: PqqA peptide cyclase (376 aa).

Residues Val7 to Ala222 form the Radical SAM core domain. 3 residues coordinate [4Fe-4S] cluster: Cys21, Cys25, and Cys28.

Belongs to the radical SAM superfamily. PqqE family. Interacts with PqqD. The interaction is necessary for activity of PqqE. [4Fe-4S] cluster is required as a cofactor.

It carries out the reaction [PQQ precursor protein] + S-adenosyl-L-methionine = E-Y cross-linked-[PQQ precursor protein] + 5'-deoxyadenosine + L-methionine + H(+). The protein operates within cofactor biosynthesis; pyrroloquinoline quinone biosynthesis. Functionally, catalyzes the cross-linking of a glutamate residue and a tyrosine residue in the PqqA protein as part of the biosynthesis of pyrroloquinoline quinone (PQQ). The polypeptide is PqqA peptide cyclase (Pseudomonas putida (strain ATCC 700007 / DSM 6899 / JCM 31910 / BCRC 17059 / LMG 24140 / F1)).